A 198-amino-acid chain; its full sequence is Holliday junction branch migration complex subunit RuvA (198 aa).

Positions Met1–Glu64 are domain I. The interval Ser65–Glu143 is domain II. The interval Phe144–Ala154 is flexible linker. Positions Ala154–Gly198 are domain III.

The protein belongs to the RuvA family. As to quaternary structure, homotetramer. Forms an RuvA(8)-RuvB(12)-Holliday junction (HJ) complex. HJ DNA is sandwiched between 2 RuvA tetramers; dsDNA enters through RuvA and exits via RuvB. An RuvB hexamer assembles on each DNA strand where it exits the tetramer. Each RuvB hexamer is contacted by two RuvA subunits (via domain III) on 2 adjacent RuvB subunits; this complex drives branch migration. In the full resolvosome a probable DNA-RuvA(4)-RuvB(12)-RuvC(2) complex forms which resolves the HJ.

The protein resides in the cytoplasm. Its function is as follows. The RuvA-RuvB-RuvC complex processes Holliday junction (HJ) DNA during genetic recombination and DNA repair, while the RuvA-RuvB complex plays an important role in the rescue of blocked DNA replication forks via replication fork reversal (RFR). RuvA specifically binds to HJ cruciform DNA, conferring on it an open structure. The RuvB hexamer acts as an ATP-dependent pump, pulling dsDNA into and through the RuvAB complex. HJ branch migration allows RuvC to scan DNA until it finds its consensus sequence, where it cleaves and resolves the cruciform DNA. The sequence is that of Holliday junction branch migration complex subunit RuvA from Clostridium botulinum (strain Eklund 17B / Type B).